A 398-amino-acid chain; its full sequence is Phosphoglycerate kinase (398 aa).

Substrate contacts are provided by residues Asp21–Asn23, Arg36, His59–Arg62, Arg119, and Arg157. ATP is bound by residues Lys208, Gly296, Glu327, and Gly354–Ser357.

The protein belongs to the phosphoglycerate kinase family. Monomer.

The protein localises to the cytoplasm. It carries out the reaction (2R)-3-phosphoglycerate + ATP = (2R)-3-phospho-glyceroyl phosphate + ADP. It participates in carbohydrate degradation; glycolysis; pyruvate from D-glyceraldehyde 3-phosphate: step 2/5. The sequence is that of Phosphoglycerate kinase from Streptococcus pyogenes serotype M3 (strain ATCC BAA-595 / MGAS315).